A 382-amino-acid chain; its full sequence is MTEQRPLTIALVAGETSGDILGAGLIRALKERVPNARFVGVAGPRMQAEGCEAWYEMEELAVMGIVEVLGRLRRLLHIRADLTTRFGELKPDVFVGIDAPDFNITLEGNLKKQGIKTIHYVSPSVWAWRQKRVFKIGRATDLVLAFLPFEKAFYDKYNVPCRFIGHTMADAMPLDPDKNGARDVLGIPHDAHCLALLPGSRGAEVEMLSADFLKTAQLLRQTYPDLEIVVPLVNAKRREQFERIKAEVAPDLSVHMLDGLGREAMVASDAALLASGTAALECMLAKCPMVVGYRMKPFTFWLAKRLVKTDYVSLPNLLAGRELVKELLQEECEPQKLAAALLPLLANGKTSHAMHDTFRELHQQIRCNADEQAAQAVLELAQ.

Belongs to the LpxB family.

It carries out the reaction 2-N,3-O-bis[(3R)-3-hydroxytetradecanoyl]-alpha-D-glucosaminyl 1-phosphate + UDP-2-N,3-O-bis[(3R)-3-hydroxytetradecanoyl]-alpha-D-glucosamine = lipid A disaccharide (E. coli) + UDP + H(+). The catalysed reaction is a lipid X + a UDP-2-N,3-O-bis[(3R)-3-hydroxyacyl]-alpha-D-glucosamine = a lipid A disaccharide + UDP + H(+). It participates in glycolipid biosynthesis; lipid IV(A) biosynthesis; lipid IV(A) from (3R)-3-hydroxytetradecanoyl-[acyl-carrier-protein] and UDP-N-acetyl-alpha-D-glucosamine: step 5/6. Its function is as follows. Condensation of UDP-2,3-diacylglucosamine and 2,3-diacylglucosamine-1-phosphate to form lipid A disaccharide, a precursor of lipid A, a phosphorylated glycolipid that anchors the lipopolysaccharide to the outer membrane of the cell. This is Lipid-A-disaccharide synthase from Escherichia coli O17:K52:H18 (strain UMN026 / ExPEC).